A 486-amino-acid chain; its full sequence is Argininosuccinate lyase (486 aa).

The protein belongs to the lyase 1 family. Argininosuccinate lyase subfamily.

The protein resides in the cytoplasm. It catalyses the reaction 2-(N(omega)-L-arginino)succinate = fumarate + L-arginine. Its pathway is amino-acid biosynthesis; L-arginine biosynthesis; L-arginine from L-ornithine and carbamoyl phosphate: step 3/3. The sequence is that of Argininosuccinate lyase from Acidovorax ebreus (strain TPSY) (Diaphorobacter sp. (strain TPSY)).